The following is a 159-amino-acid chain: Serine-protein kinase RsbW (159 aa).

It belongs to the anti-sigma-factor family.

The enzyme catalyses L-seryl-[protein] + ATP = O-phospho-L-seryl-[protein] + ADP + H(+). It catalyses the reaction L-threonyl-[protein] + ATP = O-phospho-L-threonyl-[protein] + ADP + H(+). Its function is as follows. Negative regulator of sigma-B activity. Phosphorylates and inactivates its specific antagonist protein, RsbV. Upon phosphorylation of RsbV, RsbW is released and binds to sigma-B, thereby blocking its ability to form an RNA polymerase holoenzyme (E-sigma-B). This chain is Serine-protein kinase RsbW, found in Staphylococcus epidermidis.